The following is a 362-amino-acid chain: 4-hydroxytryptamine kinase (362 aa).

Residues Asn-37, Lys-57, and 118 to 120 each bind ATP; that span reads QDV. Asp-224 is a catalytic residue. 249-251 lines the ATP pocket; sequence DWE.

The protein belongs to the methylthioribose kinase family. As to quaternary structure, monomer. The cofactor is Mg(2+).

The catalysed reaction is 4-hydroxytryptamine + ATP = norbaeocystin + ADP + H(+). It catalyses the reaction psilocin + ATP = psilocybin + ADP + H(+). It carries out the reaction 4-hydroxy-N,N,N-trimethyltryptamine + ATP = aeruginascin + ADP + H(+). It functions in the pathway secondary metabolite biosynthesis. 4-hydroxytryptamine kinase; part of the gene cluster that mediates the biosynthesis of psilocybin, a psychotropic tryptamine-derived natural product. The first step in the pathway is the decarboxylation of L-tryptophan to tryptamine by the decarboxylase psiD. 4-hydroxy-L-tryptophan is accepted as substrate by psiD as well. The cytochrome P450 monooxygenase psiH then converts tryptamine to 4-hydroxytryptamine. The kinase psiK catalyzes the 4-O-phosphorylation step by converting 4-hydroxytryptamine into norbaeocystin. The methyltransferase psiM then catalyzes iterative methyl transfer to the amino group of norbaeocystin to yield psilocybin via a monomethylated intermediate, baeocystin. 4-hydroxy-6-methyl-l-tryptophancan also be converted the decarboxylase PsiD, kinase PsiK, and methyltransferase PsiM into respectively 6-methyl-norbaeocystin, 6-methylbaeocystin, and 6-methylpsilocybin. PsiK kinase can also turn psilocin into psilocybin. This activity may represent a protective mechanism to rephosphorylate the unstable psilocin to the stable psilocybin in case of intracellular ester cleavage. Moreover, psiK is able to O-phosphorylate the quaternary amine 4-hydroxy-N,N,N-trimethyltryptamine (4-OH-TMT) to yield aeruginascin, another bioactive compound found in Psilocybe species. The sequence is that of 4-hydroxytryptamine kinase from Psilocybe cubensis (Psychedelic mushroom).